The primary structure comprises 896 residues: Translation initiation factor IF-2 (896 aa).

The disordered stretch occupies residues L49–T310. Positions S57–T66 are enriched in polar residues. Basic and acidic residues-rich tracts occupy residues S101 to N174, A184 to D240, and R250 to A263. The segment covering R284–L295 has biased composition (basic residues). The tr-type G domain occupies G395–T564. The G1 stretch occupies residues G404–T411. Residue G404 to T411 participates in GTP binding. Residues G429–H433 form a G2 region. The interval D450–G453 is G3. Residues D450–H454 and N504–D507 contribute to the GTP site. The tract at residues N504–D507 is G4. The tract at residues S540 to K542 is G5.

Belongs to the TRAFAC class translation factor GTPase superfamily. Classic translation factor GTPase family. IF-2 subfamily.

It localises to the cytoplasm. Functionally, one of the essential components for the initiation of protein synthesis. Protects formylmethionyl-tRNA from spontaneous hydrolysis and promotes its binding to the 30S ribosomal subunits. Also involved in the hydrolysis of GTP during the formation of the 70S ribosomal complex. This chain is Translation initiation factor IF-2, found in Vibrio atlanticus (strain LGP32) (Vibrio splendidus (strain Mel32)).